Reading from the N-terminus, the 194-residue chain is MSDVKAIIGLGNPGTEYDATRHNAGAWVVEALARDSLTPLRAERKFLGQYAKVRYAGHDVHLLVPSTYMNRSGKAVAALCQFFKLTPDELLIAHDELDIAPGTARYKHGGGHGGHNGLRDTVSALGNDKSFHRLRIGIGHPGSAKQVVNYVLGRPGKAERAAIDAAIDECLRTLPDVLDGNWAGAMNRLHSFNA.

Y17 is a tRNA binding site. Residue H22 is the Proton acceptor of the active site. TRNA contacts are provided by Y68, N70, and N116.

This sequence belongs to the PTH family. Monomer.

It localises to the cytoplasm. It catalyses the reaction an N-acyl-L-alpha-aminoacyl-tRNA + H2O = an N-acyl-L-amino acid + a tRNA + H(+). Hydrolyzes ribosome-free peptidyl-tRNAs (with 1 or more amino acids incorporated), which drop off the ribosome during protein synthesis, or as a result of ribosome stalling. Functionally, catalyzes the release of premature peptidyl moieties from peptidyl-tRNA molecules trapped in stalled 50S ribosomal subunits, and thus maintains levels of free tRNAs and 50S ribosomes. The polypeptide is Peptidyl-tRNA hydrolase (Chromohalobacter salexigens (strain ATCC BAA-138 / DSM 3043 / CIP 106854 / NCIMB 13768 / 1H11)).